A 266-amino-acid chain; its full sequence is N-acetylneuraminate lyase B (266 aa).

Residues threonine 51 and threonine 52 each contribute to the aceneuramate site. The active-site Proton donor is tyrosine 143. Lysine 173 functions as the Schiff-base intermediate with substrate in the catalytic mechanism. Aceneuramate contacts are provided by serine 175, glycine 197, aspartate 199, glutamate 200, and serine 216.

The protein belongs to the DapA family. NanA subfamily. Homotetramer.

The protein resides in the cytoplasm. It carries out the reaction aceneuramate = aldehydo-N-acetyl-D-mannosamine + pyruvate. Its pathway is amino-sugar metabolism; N-acetylneuraminate degradation. In terms of biological role, catalyzes the cleavage of N-acetylneuraminic acid (sialic acid) to form pyruvate and N-acetylmannosamine via a Schiff base intermediate. It prevents sialic acids from being recycled and returning to the cell surface. Involved in the N-glycolylneuraminic acid (Neu5Gc) degradation pathway. The polypeptide is N-acetylneuraminate lyase B (npl-b) (Xenopus laevis (African clawed frog)).